The chain runs to 162 residues: Caveolin-2 (162 aa).

At 1–86 (MGLETEKADV…FEISKYVLYK (86 aa)) the chain is on the cytoplasmic side. A Phosphotyrosine; by SRC modification is found at tyrosine 19. A phosphoserine mark is found at serine 20 and serine 23. Phosphotyrosine; by SRC is present on tyrosine 27. Serine 36 carries the post-translational modification Phosphoserine. The helical intramembrane region spans 87 to 107 (FLTVFLAIPLAFVAGILFATL). At 108-162 (SCLHIWIIMPFVKTCLMVLPSVQTIWKSVTDVIIAPLCTSVGRSFSSISLRLSQD) the chain is on the cytoplasmic side.

The protein belongs to the caveolin family. Monomer or homodimer. Interacts with CAV1; the interaction forms a stable heterooligomeric complex that is required for targeting to lipid rafts and for caveolae formation. Tyrosine phosphorylated forms do not form heterooligomers with the Tyr-19-phosphorylated form existing as a monomer or dimer, and the Tyr-27-form as a monomer only. Interacts (tyrosine phosphorylated form) with the SH2 domain-containing proteins, RASA1, NCK1 and SRC. Interacts (tyrosine phosphorylated form) with INSR, the interaction (Tyr-27-phosphorylated form) is increased on insulin stimulation. Interacts (Tyr-19 phosphorylated form) with MAPK1 (phosphorylated form); the interaction, promoted by insulin, leads to nuclear location and MAPK1 activation. Interacts with STAT3; the interaction is increased on insulin-induced tyrosine phosphorylation leading to STAT activation. In terms of processing, phosphorylated on serine and tyrosine residues. CAV1 promotes phosphorylation on Ser-23 which then targets the complex to the plasma membrane, lipid rafts and caveolae. Phosphorylation on Ser-36 appears to modulate mitosis in endothelial cells. Phosphorylation on both Tyr-19 and Tyr-27 is required for insulin-induced 'Ser-727' phosphorylation of STAT3 and its activation. Phosphorylation on Tyr-19 is required for insulin-induced phosphorylation of MAPK1 and DNA binding of STAT3. Tyrosine phosphorylation is induced by both EGF and insulin (By. similarity).

The protein resides in the nucleus. The protein localises to the cytoplasm. Its subcellular location is the golgi apparatus membrane. It is found in the cell membrane. It localises to the membrane. The protein resides in the caveola. May act as a scaffolding protein within caveolar membranes. Interacts directly with G-protein alpha subunits and can functionally regulate their activity. Acts as an accessory protein in conjunction with CAV1 in targeting to lipid rafts and driving caveolae formation. The Ser-36 phosphorylated form has a role in modulating mitosis in endothelial cells. Positive regulator of cellular mitogenesis of the MAPK signaling pathway. Required for the insulin-stimulated nuclear translocation and activation of MAPK1 and STAT3, and the subsequent regulation of cell cycle progression. This chain is Caveolin-2 (CAV2), found in Otolemur garnettii (Small-eared galago).